We begin with the raw amino-acid sequence, 352 residues long: RNA demethylase ALKBH5 (352 aa).

Basic and acidic residues predominate over residues 18–34; that stretch reads RDKVFEYSNGEKRKYRE. The disordered stretch occupies residues 18-47; sequence RDKVFEYSNGEKRKYRESDDDESEYEERRD. Residue Y107 is part of the active site. Residues N161, Y163, and H172 each contribute to the 2-oxoglutarate site. Fe cation-binding residues include H172, D174, and H234. A disulfide bridge connects residues C198 and C235. Positions 234 and 245 each coordinate 2-oxoglutarate. Positions 260-352 are disordered; that stretch reads LDSNSLSPSI…PTRRVKMRRH (93 aa). Over residues 272-285 the composition is skewed to basic residues; sequence PKRRHILKAKRSHR. 2 stretches are compositionally biased toward basic and acidic residues: residues 286–306 and 315–343; these read KADP…ELQR and RHDD…DHAP.

Belongs to the alkB family. In terms of assembly, monomer. Fe(2+) is required as a cofactor.

It is found in the nucleus speckle. The catalysed reaction is an N(6)-methyladenosine in mRNA + 2-oxoglutarate + O2 = an adenosine in mRNA + formaldehyde + succinate + CO2. Dioxygenase that specifically demethylates N(6)-methyladenosine (m6A) RNA, the most prevalent internal modification of messenger RNA (mRNA) in higher eukaryotes. Demethylates RNA by oxidative demethylation, which requires molecular oxygen, alpha-ketoglutarate and iron. Demethylation of m6A mRNA affects mRNA processing, translation and export. The sequence is that of RNA demethylase ALKBH5 (alkbh5) from Danio rerio (Zebrafish).